The primary structure comprises 420 residues: Transcription factor IIIB 50 kDa subunit (420 aa).

A TFIIB-type zinc finger spans residues 3–36 (NGSRCPDCGSSELVEDSHYSQSQLVCSDCGCVVT). Zn(2+)-binding residues include Cys-7, Cys-10, Cys-28, and Cys-31. 2 repeat units span residues 72 to 157 (DLRR…MQMV) and 173 to 249 (VKSY…SLAQ). The interval 108 to 114 (AARLQKK) is interaction with target DNA. The tract at residues 316–387 (TAEVETQQQQ…AVTGDEDISD (72 aa)) is disordered. Residues 322 to 336 (QQQQQQQQGQGQGQQ) show a composition bias toward low complexity. Ser-354 is subject to Phosphoserine. Positions 358 to 364 (LLPPCML) are required for the formation of a ternary complex with DNA and TBP; not required for interaction with TBP in the absence of DNA. The residue at position 362 (Cys-362) is a Cysteine sulfenic acid (-SOH). The interval 366–420 (PPKRTHTLPPESAVTGDEDISDSEIEQYLRTPQEVRDFERAQAASQAAMRVPNPP) is required for interaction with TBP and formation of a ternary complex with DNA and TBP.

Belongs to the TFIIB family. Component of TFIIIB complexes. The TFIIIB complex has two activities, alpha and beta. The TFIIIB-alpha activity complex is composed of TBP, BDP1, and a complex containing both BRF2 and at least four stably associated proteins; this complex inhibits the transcription by pol III via its phosphorylation by CK2; YY1 facilitates the TFIIIB-alpha complex formation. Interacts with TBP; this interaction promotes recruitment of BRF2 to TATA box-containing promoters. Interacts with TBP and the BURE sequence (GC-rich sequence downstream from the TATA box) to form a strong ternary complex which is joined by BDP1; this ternary complex stimulates pol III transcription. Forms a trimeric complex composed of TBP, BRF2 and mini-SNAPc complex (SNAP43, SNAP50, and the N-terminal third of SNAP190) on the promoter. Assembly of the TBP-BRF2 complex is stimulated by SNAP190. Interacts with MAF1 and SNAPC4. Post-translationally, in response to oxidative stress, Cys-362 is reversibly oxidized to cysteine sulfenic acid. Oxidation of Cys-362 impairs formation of a ternary complex with TBP and DNA and down-regulates expression of target genes in response to oxidative stress.

Its subcellular location is the nucleus. In terms of biological role, general activator of RNA polymerase III transcription. Factor exclusively required for RNA polymerase III transcription of genes with promoter elements upstream of the initiation sites. Contributes to the regulation of gene expression; functions as activator in the absence of oxidative stress. Down-regulates expression of target genes in response to oxidative stress. Overexpression protects cells against apoptosis in response to oxidative stress. The polypeptide is Transcription factor IIIB 50 kDa subunit (Brf2) (Mus musculus (Mouse)).